A 275-amino-acid chain; its full sequence is Large ribosomal subunit protein uL2 (275 aa).

The tract at residues 221 to 275 (VRGVAMNPVDHPMGGGEGKSSGGRHPCSPWGQQSKGVRTRNNKRTDQFIVKRRSK) is disordered.

The protein belongs to the universal ribosomal protein uL2 family. Part of the 50S ribosomal subunit. Forms a bridge to the 30S subunit in the 70S ribosome.

In terms of biological role, one of the primary rRNA binding proteins. Required for association of the 30S and 50S subunits to form the 70S ribosome, for tRNA binding and peptide bond formation. It has been suggested to have peptidyltransferase activity; this is somewhat controversial. Makes several contacts with the 16S rRNA in the 70S ribosome. The sequence is that of Large ribosomal subunit protein uL2 from Desulfosudis oleivorans (strain DSM 6200 / JCM 39069 / Hxd3) (Desulfococcus oleovorans).